Here is a 137-residue protein sequence, read N- to C-terminus: Phosphoribosyl-AMP cyclohydrolase (137 aa).

Asp-84 is a Mg(2+) binding site. A Zn(2+)-binding site is contributed by Cys-85. Asp-86 and Asp-88 together coordinate Mg(2+). Zn(2+)-binding residues include Cys-101 and Cys-108.

Belongs to the PRA-CH family. Homodimer. It depends on Mg(2+) as a cofactor. Zn(2+) serves as cofactor.

It localises to the cytoplasm. The catalysed reaction is 1-(5-phospho-beta-D-ribosyl)-5'-AMP + H2O = 1-(5-phospho-beta-D-ribosyl)-5-[(5-phospho-beta-D-ribosylamino)methylideneamino]imidazole-4-carboxamide. It functions in the pathway amino-acid biosynthesis; L-histidine biosynthesis; L-histidine from 5-phospho-alpha-D-ribose 1-diphosphate: step 3/9. Its function is as follows. Catalyzes the hydrolysis of the adenine ring of phosphoribosyl-AMP. This Chlorobaculum parvum (strain DSM 263 / NCIMB 8327) (Chlorobium vibrioforme subsp. thiosulfatophilum) protein is Phosphoribosyl-AMP cyclohydrolase.